The primary structure comprises 239 residues: tRNA (guanine-N(7)-)-methyltransferase (239 aa).

S-adenosyl-L-methionine is bound by residues Gly-64, 87-88 (EI), 120-121 (NA), and Leu-140. The active site involves Asp-143. S-adenosyl-L-methionine is bound at residue 218 to 220 (SEE).

The protein belongs to the class I-like SAM-binding methyltransferase superfamily. TrmB family.

The protein resides in the nucleus. It catalyses the reaction guanosine(46) in tRNA + S-adenosyl-L-methionine = N(7)-methylguanosine(46) in tRNA + S-adenosyl-L-homocysteine. It participates in tRNA modification; N(7)-methylguanine-tRNA biosynthesis. Catalyzes the formation of N(7)-methylguanine at position 46 (m7G46) in tRNA. The polypeptide is tRNA (guanine-N(7)-)-methyltransferase (Culex quinquefasciatus (Southern house mosquito)).